The following is a 355-amino-acid chain: Protein-glutamate methylesterase/protein-glutamine glutaminase 3 (355 aa).

The 119-residue stretch at 8–126 folds into the Response regulatory domain; it reads RVLVVDDSPT…AEELRRWGKE (119 aa). A 4-aspartylphosphate modification is found at Asp-59. Residues 152 to 337 enclose the CheB-type methylesterase domain; it reads PPTGARVDIF…LASMPELILQ (186 aa). Residues Ser-166, His-193, and Asp-284 contribute to the active site.

This sequence belongs to the CheB family. In terms of processing, phosphorylated by CheA. Phosphorylation of the N-terminal regulatory domain activates the methylesterase activity.

The protein localises to the cytoplasm. The enzyme catalyses [protein]-L-glutamate 5-O-methyl ester + H2O = L-glutamyl-[protein] + methanol + H(+). It carries out the reaction L-glutaminyl-[protein] + H2O = L-glutamyl-[protein] + NH4(+). Its function is as follows. Involved in chemotaxis. Part of a chemotaxis signal transduction system that modulates chemotaxis in response to various stimuli. Catalyzes the demethylation of specific methylglutamate residues introduced into the chemoreceptors (methyl-accepting chemotaxis proteins or MCP) by CheR. Also mediates the irreversible deamidation of specific glutamine residues to glutamic acid. In Myxococcus xanthus (strain DK1622), this protein is Protein-glutamate methylesterase/protein-glutamine glutaminase 3.